We begin with the raw amino-acid sequence, 1206 residues long: MKKNQTMQGTFSKLFGKKHAHPSTTSLYATNPPWIFTHEAQEEGTRDFDGIYYGDNRFNTVSESGTATLKARPRVRPLLTFIPLNAQENHGLAVPTPSVPEDFADKEVGGTSTLVNGNLRLYSSVGDLRPACYDLDSSIPPPPPGPAPGPPQDISQPPGESPPPPPPSVPPPPPPPLLVEPPPPPSTAPPPPPPLDILSPPSTPTPPDFIPPAPPSAFLSPPPPSLPAPGPPAPVSLHTPGTHLFPPGAITKWKSEVALNGRHPEDPRTSPPKSPAELKRSPLGPSPEPHLTFPRSPKVPPPTPVRTSSIPVQEAPGASPEEEEATQKTSAPSPLPPSFNIRPASQIYPDRALEPEQPREPRPETPGSPRLRQSEPQTNGQAGAPPPAPPLPPPAPPLPPPAPSLPPAAPPLPSTELAAPPSSGFMKTSKSNSPALKPKPKPPSVEDTASSEPVDWRDPRQMEKLRSELSAYLCGTRKEDRSLSHRPGPTVALKDKENNKGTSLSEEAAPPSLPEKVHPCIPEKSPSSSSLPEREATSSLVLPPVDYIAQDTPAPSVRQIRSELEARFASSAEKEAKPSLASLPPKPRLEGGRTFENGTDNGRFHKPATKNPPQPSTTPLPTTILQPKVVPGPATSPKVTPGPATPFKPTPGQAILPKATPGLTLPLKPTPEQTTSPKNTPGKATPLKDTPGQATTPKDTPGQDTPPKDTPGQAAVLKNAPELSTPSSQLMAEKDLASVRQREKPETQEDPVATQLSTNGTLSPPALPPKMSTSGEEAPFLYRPHRSQNSHSRGVAVVTPTRARGEAPDSGDVVDEKELQNHPAKSLTPGQPADQLLRHPVTGEVVERGSPMALLLAARQRAQKTRTGGTAIGRSSLPGSLRDHSNQPEASSDSIFYRGSRPNSFIVVPKVPSETEDSHLTSARPTGPSHWKPQQGPDTQGSEPTYRHGWTKAETPAPVARERPAPSSLPQSRALPKSFSSPPSPSYKREEEEEEFSFDIIPPPPEFSNDPEPPAPGQQHQGRRGSPPRNNFSDLGQSWGPNPTPGFSRFRGTQYPESGGLDRFSGSGRSLIKKRLYVGESHRNPGMPRGSTGRSLSSPNCFGPQPGGPEMRRVNSAGRAAPGGLHARRLSLEGARGATEVKFKAPGGGGGSSSKAGDYGFVPAKGSRSPHGNTHYGSPINTFTVRPGTRHPISYAYPGTHRKATS.

Disordered regions lie at residues 133–547 (YDLD…PVDY), 568–837 (FASS…DQLL), and 859–1206 (RQRA…KATS). 2 stretches are compositionally biased toward pro residues: residues 139 to 151 (IPPPPPGPAPGPP) and 159 to 234 (GESP…PPAP). At S255 the chain carries Phosphoserine. Residues 305–319 (VRTSSIPVQEAPGAS) show a composition bias toward low complexity. A compositionally biased stretch (basic and acidic residues) spans 351 to 363 (RALEPEQPREPRP). Over residues 384–413 (APPPAPPLPPPAPPLPPPAPSLPPAAPPLP) the composition is skewed to pro residues. Over residues 414–436 (STELAAPPSSGFMKTSKSNSPAL) the composition is skewed to low complexity. The segment covering 454–467 (VDWRDPRQMEKLRS) has biased composition (basic and acidic residues). Over residues 522-531 (PEKSPSSSSL) the composition is skewed to low complexity. A compositionally biased stretch (basic and acidic residues) spans 568–577 (FASSAEKEAK). A compositionally biased stretch (low complexity) spans 656–671 (LPKATPGLTLPLKPTP). T680 carries the phosphothreonine modification. The segment covering 732 to 747 (AEKDLASVRQREKPET) has biased composition (basic and acidic residues). Residues 1001–1016 (IPPPPEFSNDPEPPAP) show a composition bias toward pro residues. Polar residues predominate over residues 1028-1041 (PRNNFSDLGQSWGP). An omega-N-methylarginine mark is found at R1051, R1083, and R1094. A compositionally biased stretch (polar residues) spans 1170–1184 (PHGNTHYGSPINTFT).

This is an uncharacterized protein from Mus musculus (Mouse).